We begin with the raw amino-acid sequence, 464 residues long: MMARRDPKSWAKRLVRAQTLQKQRRAPVGPRAPPPDEEDPRLKCKNCGAFGHTARSTRCPMKCWKAALVPATLGKKEGKENLKPWKPRAEANPGPLNKDKGEKEERPRQQDPQRKALLHMFSGKPPEKPLPNGKGSTESSDYLRVASGPMPVHTSSKRPRLDPILADRSATAMSGRGSVLASLSPLRKASLSSSSSLGPKERQTGAAADMPQPAVRHEGREPLLVVKPTHSRPEGGCREVPQAASKTHGLPQAARPQAQDKRPAVTSLPCPPAATHSLGLGSNLSFGPGAKRPAQAPIQACLNFPKKPRLGPFQIPESAIQGGELGAPENLQPPPAATELGPSTSPQMGRRTPAQVPSVDRQPPHSRPCLPTAQACTMSHHSAASHDGAQPLRVLFRRLENGRWSSSLLAAPSFHSPEKPGAFLAQSPHVSEKSEAPCVRVPPSVLYEDLQVSSSSEDSDSDLE.

Disordered regions lie at residues 1-42 (MMAR…DPRL), 70-389 (PATL…HDGA), and 411-437 (APSF…SEAP). Basic and acidic residues-rich tracts occupy residues 74–89 (GKKE…KPRA) and 97–114 (NKDK…DPQR). Over residues 180-197 (LASLSPLRKASLSSSSSL) the composition is skewed to low complexity.

Belongs to the FAM90 family.

This Homo sapiens (Human) protein is Protein FAM90A12.